The following is a 394-amino-acid chain: 1-deoxy-D-xylulose 5-phosphate reductoisomerase (394 aa).

NADPH contacts are provided by threonine 12, glycine 13, serine 14, isoleucine 15, glycine 38, asparagine 41, and asparagine 132. Lysine 133 is a 1-deoxy-D-xylulose 5-phosphate binding site. Glutamate 134 contributes to the NADPH binding site. Position 156 (aspartate 156) interacts with Mn(2+). 1-deoxy-D-xylulose 5-phosphate-binding residues include serine 157, glutamate 158, serine 182, and histidine 205. Residue glutamate 158 participates in Mn(2+) binding. Glycine 211 serves as a coordination point for NADPH. Residues serine 218, asparagine 223, lysine 224, and glutamate 227 each coordinate 1-deoxy-D-xylulose 5-phosphate. A Mn(2+)-binding site is contributed by glutamate 227.

The protein belongs to the DXR family. Mg(2+) serves as cofactor. It depends on Mn(2+) as a cofactor.

It carries out the reaction 2-C-methyl-D-erythritol 4-phosphate + NADP(+) = 1-deoxy-D-xylulose 5-phosphate + NADPH + H(+). It participates in isoprenoid biosynthesis; isopentenyl diphosphate biosynthesis via DXP pathway; isopentenyl diphosphate from 1-deoxy-D-xylulose 5-phosphate: step 1/6. In terms of biological role, catalyzes the NADPH-dependent rearrangement and reduction of 1-deoxy-D-xylulose-5-phosphate (DXP) to 2-C-methyl-D-erythritol 4-phosphate (MEP). This chain is 1-deoxy-D-xylulose 5-phosphate reductoisomerase, found in Arthrobacter sp. (strain FB24).